We begin with the raw amino-acid sequence, 739 residues long: Protein kinase C (739 aa).

Residues Met-1–Val-117 form the C2 domain. 2 Phorbol-ester/DAG-type zinc fingers span residues Gly-176 to Cys-226 and Pro-251 to Cys-301. The Protein kinase domain occupies Phe-408 to Phe-665. ATP contacts are provided by residues Leu-414 to Val-422 and Lys-437. Asp-532 functions as the Proton acceptor in the catalytic mechanism. Residues Ala-666 to Lys-737 form the AGC-kinase C-terminal domain.

The protein belongs to the protein kinase superfamily. AGC Ser/Thr protein kinase family. PKC subfamily.

It carries out the reaction L-seryl-[protein] + ATP = O-phospho-L-seryl-[protein] + ADP + H(+). It catalyses the reaction L-threonyl-[protein] + ATP = O-phospho-L-threonyl-[protein] + ADP + H(+). In terms of biological role, PKC is activated by diacylglycerol which in turn phosphorylates a range of cellular proteins. PKC also serves as the receptor for phorbol esters, a class of tumor promoters. This is Protein kinase C (Pkc98E) from Drosophila melanogaster (Fruit fly).